A 428-amino-acid polypeptide reads, in one-letter code: MQSLTLQPISRINGTINLPGSKSVSNRALLLAAFAKGTTRLTNLLDSDDIRYMLNALTALDIPYRLSADRTVCEVEGRSGNITGKSGLELFLGNAGTAMRPLAAALCLGDNEIVLTGEPRMKERPIGHLVDALRQGGAKIDYIEQENYPPLHIKGGFSGGKVTVDGSVSSQFLTALLMAAPLAVNNTEIHIQGDLVSKPYIDITLALMKSFGVTVENHQYQVFYIRGRQQYLSPGQYLVEGDASSASYFLAAAAIKGGIVRVTGIGKNSLQGDTKFANVLEQMGATIRWGDDFVECERGTLTGIDMDMNAIPDAAMTIATTALFAQGETVIRNIYNWRVKETDRLNAMATELRKVGAEVEEGLDYIRVIPPEKIQHAEIETYNDHRVAMCFSLVALSNTPVTILDPGCTAKTFPDYFNQLKKLSEYTT.

The 3-phosphoshikimate site is built by K22, S23, and R27. K22 provides a ligand contact to phosphoenolpyruvate. G96 and R124 together coordinate phosphoenolpyruvate. 3-phosphoshikimate is bound by residues S169, S170, Q171, S197, D313, N336, and K340. Position 171 (Q171) interacts with phosphoenolpyruvate. D313 serves as the catalytic Proton acceptor. The phosphoenolpyruvate site is built by R344, R386, and K411.

This sequence belongs to the EPSP synthase family. As to quaternary structure, monomer.

It localises to the cytoplasm. It catalyses the reaction 3-phosphoshikimate + phosphoenolpyruvate = 5-O-(1-carboxyvinyl)-3-phosphoshikimate + phosphate. It functions in the pathway metabolic intermediate biosynthesis; chorismate biosynthesis; chorismate from D-erythrose 4-phosphate and phosphoenolpyruvate: step 6/7. Catalyzes the transfer of the enolpyruvyl moiety of phosphoenolpyruvate (PEP) to the 5-hydroxyl of shikimate-3-phosphate (S3P) to produce enolpyruvyl shikimate-3-phosphate and inorganic phosphate. In Xenorhabdus nematophila (strain ATCC 19061 / DSM 3370 / CCUG 14189 / LMG 1036 / NCIMB 9965 / AN6), this protein is 3-phosphoshikimate 1-carboxyvinyltransferase.